We begin with the raw amino-acid sequence, 255 residues long: Thiazole synthase (255 aa).

Lysine 96 (schiff-base intermediate with DXP) is an active-site residue. 1-deoxy-D-xylulose 5-phosphate is bound by residues glycine 157, 183 to 184 (AG), and 205 to 206 (NT).

This sequence belongs to the ThiG family. In terms of assembly, homotetramer. Forms heterodimers with either ThiH or ThiS.

The protein localises to the cytoplasm. The enzyme catalyses [ThiS sulfur-carrier protein]-C-terminal-Gly-aminoethanethioate + 2-iminoacetate + 1-deoxy-D-xylulose 5-phosphate = [ThiS sulfur-carrier protein]-C-terminal Gly-Gly + 2-[(2R,5Z)-2-carboxy-4-methylthiazol-5(2H)-ylidene]ethyl phosphate + 2 H2O + H(+). The protein operates within cofactor biosynthesis; thiamine diphosphate biosynthesis. In terms of biological role, catalyzes the rearrangement of 1-deoxy-D-xylulose 5-phosphate (DXP) to produce the thiazole phosphate moiety of thiamine. Sulfur is provided by the thiocarboxylate moiety of the carrier protein ThiS. In vitro, sulfur can be provided by H(2)S. The polypeptide is Thiazole synthase (Anoxybacillus flavithermus (strain DSM 21510 / WK1)).